Consider the following 325-residue polypeptide: Glutarate 2-hydroxylase (325 aa).

H160, D162, and H292 together coordinate Fe cation.

Belongs to the glutarate hydroxylase family. Homotetramer. Requires Fe(2+) as cofactor.

It catalyses the reaction glutarate + 2-oxoglutarate + O2 = (S)-2-hydroxyglutarate + succinate + CO2. It participates in amino-acid degradation. Functionally, acts as an alpha-ketoglutarate-dependent dioxygenase catalyzing hydroxylation of glutarate (GA) to L-2-hydroxyglutarate (L2HG). Functions in a L-lysine degradation pathway that proceeds via cadaverine, glutarate and L-2-hydroxyglutarate. This Escherichia coli (strain 55989 / EAEC) protein is Glutarate 2-hydroxylase.